The following is a 373-amino-acid chain: Pulmonary surfactant-associated protein B (373 aa).

Positions 1-22 are cleaved as a signal peptide; the sequence is MAKSHLLPWLLLLPILCGPGTA. Positions 23–187 are excised as a propeptide; it reads AAITYSLACA…PQTQDLSEQL (165 aa). Residues 24–64 enclose the Saposin A-type domain; sequence AITYSLACAQGPEFWCQSLEQALQCRALGHCLQEVWGHVEA. 3 consecutive Saposin B-type domains span residues 64 to 146, 191 to 268, and 287 to 362; these read ADDL…KPRH, PIPY…SSED, and QDSD…AAPF. 9 cysteine pairs are disulfide-bonded: Cys-68–Cys-142, Cys-71–Cys-136, Cys-99–Cys-111, Cys-195–Cys-264, Cys-198–Cys-258, Cys-222–Cys-233, Cys-291–Cys-358, Cys-294–Cys-352, and Cys-317–Cys-327. N-linked (GlcNAc...) asparagine glycosylation is present at Asn-73. A propeptide spanning residues 267–373 is cleaved from the precursor; sequence EDSAGPALPA…PLQCVHSPHF (107 aa). The N-linked (GlcNAc...) asparagine glycan is linked to Asn-303.

As to quaternary structure, homodimer; disulfide-linked.

The protein localises to the secreted. It localises to the extracellular space. It is found in the surface film. Functionally, pulmonary surfactant-associated proteins promote alveolar stability by lowering the surface tension at the air-liquid interface in the peripheral air spaces. SP-B increases the collapse pressure of palmitic acid to nearly 70 millinewtons per meter. The chain is Pulmonary surfactant-associated protein B (SFTPB) from Bos taurus (Bovine).